A 156-amino-acid polypeptide reads, in one-letter code: MPKGEGKVVSQNKKANHDYFIEETYEAGLVLQGTEIKSIRAGKVNLKDSFAKIERGEVFLHNMHVSPYEQGNRYNHDPLRTRKLLLHRKQISKLIGATKEEGYSLVPLKLYLKNGFAKVLIGIGKGKKKYDKREDLKKKDAKREIERAFRDRQKQF.

Belongs to the SmpB family.

The protein localises to the cytoplasm. Required for rescue of stalled ribosomes mediated by trans-translation. Binds to transfer-messenger RNA (tmRNA), required for stable association of tmRNA with ribosomes. tmRNA and SmpB together mimic tRNA shape, replacing the anticodon stem-loop with SmpB. tmRNA is encoded by the ssrA gene; the 2 termini fold to resemble tRNA(Ala) and it encodes a 'tag peptide', a short internal open reading frame. During trans-translation Ala-aminoacylated tmRNA acts like a tRNA, entering the A-site of stalled ribosomes, displacing the stalled mRNA. The ribosome then switches to translate the ORF on the tmRNA; the nascent peptide is terminated with the 'tag peptide' encoded by the tmRNA and targeted for degradation. The ribosome is freed to recommence translation, which seems to be the essential function of trans-translation. This is SsrA-binding protein from Bacillus pumilus (strain SAFR-032).